The sequence spans 401 residues: Imidazolonepropionase (401 aa).

Fe(3+) contacts are provided by H70 and H72. 2 residues coordinate Zn(2+): H70 and H72. 4-imidazolone-5-propanoate is bound by residues R79, Y142, and H175. Y142 provides a ligand contact to N-formimidoyl-L-glutamate. Residue H238 participates in Fe(3+) binding. H238 is a Zn(2+) binding site. 4-imidazolone-5-propanoate is bound at residue Q241. D313 is a binding site for Fe(3+). A Zn(2+)-binding site is contributed by D313. N-formimidoyl-L-glutamate is bound by residues N315 and G317. T318 contributes to the 4-imidazolone-5-propanoate binding site.

Belongs to the metallo-dependent hydrolases superfamily. HutI family. It depends on Zn(2+) as a cofactor. The cofactor is Fe(3+).

It localises to the cytoplasm. It catalyses the reaction 4-imidazolone-5-propanoate + H2O = N-formimidoyl-L-glutamate. Its pathway is amino-acid degradation; L-histidine degradation into L-glutamate; N-formimidoyl-L-glutamate from L-histidine: step 3/3. Functionally, catalyzes the hydrolytic cleavage of the carbon-nitrogen bond in imidazolone-5-propanoate to yield N-formimidoyl-L-glutamate. It is the third step in the universal histidine degradation pathway. This Xanthomonas oryzae pv. oryzae (strain MAFF 311018) protein is Imidazolonepropionase.